The following is a 651-amino-acid chain: Mitogen-activated protein kinase kinase kinase 2 (651 aa).

The Protein kinase domain maps to Trp-68–Val-330. ATP contacts are provided by residues Ile-74 to Val-82 and Lys-97. A coiled-coil region spans residues Cys-105–His-130. Glycyl lysine isopeptide (Lys-Gly) (interchain with G-Cter in ubiquitin) cross-links involve residues Lys-108 and Lys-110. Asp-196 serves as the catalytic Proton acceptor. 3 disordered regions span residues Gly-460 to Glu-483, Arg-537 to Ser-601, and Lys-618 to Lys-651. Positions Thr-464–Tyr-477 are enriched in basic and acidic residues. Residues Ser-570–Ala-599 are compositionally biased toward polar residues. Residues Arg-605–Met-628 are a coiled coil.

This sequence belongs to the protein kinase superfamily. STE Ser/Thr protein kinase family. MAP kinase kinase kinase subfamily. In terms of tissue distribution, expressed in roots and flowers.

It localises to the cytoplasm. The protein resides in the cytoskeleton. It catalyses the reaction L-seryl-[protein] + ATP = O-phospho-L-seryl-[protein] + ADP + H(+). It carries out the reaction L-threonyl-[protein] + ATP = O-phospho-L-threonyl-[protein] + ADP + H(+). Functionally, involved in cortical microtubules organization and stabilization by regulating the phosphorylation state of microtubule-associated proteins such as MAP65-1. In Arabidopsis thaliana (Mouse-ear cress), this protein is Mitogen-activated protein kinase kinase kinase 2 (ANP2).